The sequence spans 267 residues: N-acetylgalactosamine permease IIC component 1 (267 aa).

The Periplasmic segment spans residues 1-10; that stretch reads MHEITLLQGL. Positions 1 to 237 constitute a PTS EIIC type-4 domain; it reads MHEITLLQGL…VAVLGAGFAV (237 aa). Residues 11-31 traverse the membrane as a helical segment; that stretch reads SLAALVFVLGIDFWLEALFLF. Residues 32–33 are Cytoplasmic-facing; sequence RP. A helical membrane pass occupies residues 34-54; the sequence is IIVCTLTGAILGDIQTGLITG. At 55–66 the chain is on the periplasmic side; that stretch reads GLTELAFAGLTP. Residues 67–87 traverse the membrane as a helical segment; sequence AGGVQPPNPIMAGLMTTVIAW. Topologically, residues 88-94 are cytoplasmic; sequence STGVDAK. A helical membrane pass occupies residues 95–115; sequence TAIGLGLPFSLLMQYVILFFY. The Periplasmic segment spans residues 116–141; it reads SAFSLFMTKADKCAKEADTAAFSRLN. A helical transmembrane segment spans residues 142–162; that stretch reads WTTMLIVASAYAVIAFLCTYL. The Cytoplasmic portion of the chain corresponds to 163–177; that stretch reads AQGAMQALVKAMPAW. A helical membrane pass occupies residues 178-198; that stretch reads LTHGFEVAGGILPAVGFGLLL. At 199-209 the chain is on the periplasmic side; sequence RVMFKAQYIPY. A helical transmembrane segment spans residues 210 to 230; that stretch reads LIAGFLFVCYIQVSNLLPVAV. Topologically, residues 231–267 are cytoplasmic; the sequence is LGAGFAVYEFFNAKSRQQAQPQPVASKNEEEDYSNGI.

Its subcellular location is the cell inner membrane. Functionally, the phosphoenolpyruvate-dependent sugar phosphotransferase system (PTS), a major carbohydrate active -transport system, catalyzes the phosphorylation of incoming sugar substrates concomitant with their translocation across the cell membrane. This system is involved in N-acetylgalactosamine transport. This Escherichia coli (strain K12) protein is N-acetylgalactosamine permease IIC component 1 (agaC).